The primary structure comprises 70 residues: Drosomycin (70 aa).

An N-terminal signal peptide occupies residues 1–20 (MMQIKYLFALFAVLMLVVLG). A propeptide spanning residues 21-26 (ANEADA) is cleaved from the precursor. Cystine bridges form between C28-C70, C37-C59, C45-C65, and C49-C67. A glycan (N-linked (GlcNAc...) asparagine) is linked at N42.

As to expression, hemolymph (at protein level). Synthesized in the fat body and is secreted into the blood. In larvae, expressed in the visceral branches and posterior spiracles of the trachea.

It is found in the secreted. Its function is as follows. Possesses antifungal activity and is active against a relatively broad spectrum of filamentous fungi. It inhibits spore germination at high concentrations and at low concentrations delays growth of hyphae which subsequently exhibit abnormal morphology. Spz C-106 in the hemolymph controls expression of the antifungal peptide by acting as a ligand of Tl and inducing an intracellular signaling pathway. Part of a psh-dependent Toll pathway, which may function in activating the systematic immune response in response to localized melanization of the tracheal system. This chain is Drosomycin (Drs), found in Drosophila melanogaster (Fruit fly).